Reading from the N-terminus, the 233-residue chain is 3,4-dihydroxy-2-butanone 4-phosphate synthase (233 aa).

A Mg(2+)-binding site is contributed by Glu-37. Glu-37 serves as a coordination point for Mn(2+). Residue Asp-41 coordinates D-ribulose 5-phosphate. An S-glutathionyl cysteine modification is found at Cys-66. D-ribulose 5-phosphate contacts are provided by residues Thr-92 and 150 to 154 (RRGHT). His-153 is a Mg(2+) binding site. His-153 provides a ligand contact to Mn(2+).

Homodimer. Requires Mg(2+) as cofactor. Mn(2+) serves as cofactor. Post-translationally, S-glutathionylation is reversible and dependent on a glutaredoxin.

The catalysed reaction is D-ribulose 5-phosphate = (2S)-2-hydroxy-3-oxobutyl phosphate + formate + H(+). Its pathway is cofactor biosynthesis; riboflavin biosynthesis; 2-hydroxy-3-oxobutyl phosphate from D-ribulose 5-phosphate: step 1/1. In terms of biological role, catalyzes the conversion of D-ribulose 5-phosphate to formate and 3,4-dihydroxy-2-butanone 4-phosphate. In Pyricularia oryzae (strain 70-15 / ATCC MYA-4617 / FGSC 8958) (Rice blast fungus), this protein is 3,4-dihydroxy-2-butanone 4-phosphate synthase (RIB3).